Here is a 52-residue protein sequence, read N- to C-terminus: Large ribosomal subunit protein eL40 (52 aa).

It belongs to the eukaryotic ribosomal protein eL40 family.

The sequence is that of Large ribosomal subunit protein eL40 from Thermococcus onnurineus (strain NA1).